Consider the following 378-residue polypeptide: D-galactarolactone cycloisomerase (378 aa).

3 residues coordinate Mg(2+): aspartate 194, glutamate 220, and glutamate 246. The Proton acceptor role is filled by histidine 296.

This sequence belongs to the mandelate racemase/muconate lactonizing enzyme family. Homooctamer. It depends on Mg(2+) as a cofactor.

It carries out the reaction D-glucaro-1,4-lactone = 5-dehydro-4-deoxy-D-glucarate + H(+). It catalyses the reaction D-galactaro-1,4-lactone = 5-dehydro-4-deoxy-D-glucarate + H(+). It functions in the pathway carbohydrate acid metabolism; D-galacturonate degradation via prokaryotic oxidative pathway. Functionally, catalyzes the ring opening of D-galactaro-1,4-lactone to yield 5-keto-4-deoxy-D-glucarate (KDG) via a beta-elimination reaction. This is a step in the oxidative degradation pathway of D-galacturonate, which allows A.tumefaciens to utilize D-galacturonate as a sole carbon source. To a lesser extent, can also use D-glucaro-1,4-lactone as substrate to produce KDG, but cannot use D-galactaro-1,5-lactone, D-glucaro-6,3-lactone and linear D-glucarate. This chain is D-galactarolactone cycloisomerase (gci), found in Agrobacterium fabrum (strain C58 / ATCC 33970) (Agrobacterium tumefaciens (strain C58)).